Reading from the N-terminus, the 536-residue chain is Testis-specific expressed protein 55 (536 aa).

Residues 1–11 are compositionally biased toward low complexity; it reads MEEPPQEALAE. Disordered regions lie at residues 1 to 287 and 328 to 348; these read MEEP…PGTS and SNAD…QTDH. The span at 35 to 52 shows a compositional bias: basic and acidic residues; that stretch reads QKNQAERKADNHTAHRIA. Composition is skewed to polar residues over residues 62-85 and 105-136; these read QAES…STPG and QVNQ…QVSG. Composition is skewed to basic and acidic residues over residues 138–158 and 173–222; these read TEER…ERRT and RGSR…ERRP. A compositionally biased stretch (low complexity) spans 226 to 242; that stretch reads IDSGSSVPSDQSPSVQI. Residues 243–255 are compositionally biased toward polar residues; the sequence is DSGSSVPSDQRPS. Residues 339–348 show a composition bias toward basic and acidic residues; it reads HYTESDQTDH.

Testis-specific.

The protein localises to the nucleus. The protein resides in the cell projection. Its subcellular location is the cilium. It localises to the flagellum. The polypeptide is Testis-specific expressed protein 55 (Homo sapiens (Human)).